We begin with the raw amino-acid sequence, 336 residues long: MIEADRLISAGTTLPEDVADRAIRPKLLEEYVGQPQVRSQMEIFIKAAKLRGDALDHLLIFGPPGLGKTTLANIVANEMGVNLRTTSGPVLEKAGDLAAMLTNLEPHDVLFIDEIHRLSPVVEEVLYPAMEDYQLDIMIGEGPAARSIKIDLPPFTLIGATTRAGSLTSPLRDRFGIVQRLEFYQVPDLQYIVSRSARFMGLEMSDDGAQEVARRARGTPRIANRLLRRVRDFAEVKHDGTISADIAAQALDMLNVDAEGFDYMDRKLLLAVIDKFFGGPVGLDNLAAAIGEERETIEDVLEPYLIQQGFLQRTPRGRMATTRAWNHFGITPPEMP.

The large ATPase domain (RuvB-L) stretch occupies residues 4–184 (ADRLISAGTT…FGIVQRLEFY (181 aa)). ATP-binding positions include isoleucine 23, arginine 24, glycine 65, lysine 68, threonine 69, threonine 70, 131 to 133 (EDY), arginine 174, tyrosine 184, and arginine 221. Threonine 69 contributes to the Mg(2+) binding site. The interval 185-255 (QVPDLQYIVS…IAAQALDMLN (71 aa)) is small ATPAse domain (RuvB-S). Residues 258–336 (AEGFDYMDRK…HFGITPPEMP (79 aa)) are head domain (RuvB-H). Residues arginine 294, arginine 313, and arginine 318 each contribute to the DNA site.

The protein belongs to the RuvB family. As to quaternary structure, homohexamer. Forms an RuvA(8)-RuvB(12)-Holliday junction (HJ) complex. HJ DNA is sandwiched between 2 RuvA tetramers; dsDNA enters through RuvA and exits via RuvB. An RuvB hexamer assembles on each DNA strand where it exits the tetramer. Each RuvB hexamer is contacted by two RuvA subunits (via domain III) on 2 adjacent RuvB subunits; this complex drives branch migration. In the full resolvosome a probable DNA-RuvA(4)-RuvB(12)-RuvC(2) complex forms which resolves the HJ.

The protein localises to the cytoplasm. It catalyses the reaction ATP + H2O = ADP + phosphate + H(+). In terms of biological role, the RuvA-RuvB-RuvC complex processes Holliday junction (HJ) DNA during genetic recombination and DNA repair, while the RuvA-RuvB complex plays an important role in the rescue of blocked DNA replication forks via replication fork reversal (RFR). RuvA specifically binds to HJ cruciform DNA, conferring on it an open structure. The RuvB hexamer acts as an ATP-dependent pump, pulling dsDNA into and through the RuvAB complex. RuvB forms 2 homohexamers on either side of HJ DNA bound by 1 or 2 RuvA tetramers; 4 subunits per hexamer contact DNA at a time. Coordinated motions by a converter formed by DNA-disengaged RuvB subunits stimulates ATP hydrolysis and nucleotide exchange. Immobilization of the converter enables RuvB to convert the ATP-contained energy into a lever motion, pulling 2 nucleotides of DNA out of the RuvA tetramer per ATP hydrolyzed, thus driving DNA branch migration. The RuvB motors rotate together with the DNA substrate, which together with the progressing nucleotide cycle form the mechanistic basis for DNA recombination by continuous HJ branch migration. Branch migration allows RuvC to scan DNA until it finds its consensus sequence, where it cleaves and resolves cruciform DNA. The sequence is that of Holliday junction branch migration complex subunit RuvB from Shigella flexneri serotype 5b (strain 8401).